An 862-amino-acid chain; its full sequence is Rab GTPase-binding effector protein 1 (862 aa).

N-acetylalanine is present on A2. Positions 11-328 (DVSLQQRVAE…KDQEEDEQQR (318 aa)) form a coiled coil. Position 282 is an N6-acetyllysine (K282). Disordered stretches follow at residues 315–340 (ELKKKDQEEDEQQRINKGKDNKKIDT) and 355–374 (EESSTPLSNEEEHLDSTHGS). Phosphoserine occurs at positions 374, 377, and 407. T408 is subject to Phosphothreonine. S410 is modified (phosphoserine). A coiled-coil region spans residues 534 to 816 (DMCSNYEKQL…LQTELDVSEQ (283 aa)).

The protein belongs to the rabaptin family. In terms of assembly, heterodimer with RABGEF1. The heterodimer binds RAB4A and RAB5A that have been activated by GTP-binding. Interacts with TSC2. Interacts with GGA1 (via GAE domain), GGA2 (via GAE domain) and GGA3 (via GAE domain). Interacts with AP1G1 (via GAE domain). Interacts with AP1G2 (via GAE domain). Interacts with ECPAS. Interacts with KCNH1. Interacts with PKD1 (via C-terminal domain) and GGA1; the interactions recruit PKD1:PKD2 complex to GGA1 and ARL3 at trans-Golgi network. Interacts with KCNH1. Post-translationally, proteolytic cleavage by caspases in apoptotic cells causes loss of endosome fusion activity.

The protein resides in the cytoplasm. Its subcellular location is the early endosome. It is found in the recycling endosome. The protein localises to the cytoplasmic vesicle. Rab effector protein acting as linker between gamma-adaptin, RAB4A and RAB5A. Involved in endocytic membrane fusion and membrane trafficking of recycling endosomes. Involved in KCNH1 channels trafficking to and from the cell membrane. Stimulates RABGEF1 mediated nucleotide exchange on RAB5A. Mediates the traffic of PKD1:PKD2 complex from the endoplasmic reticulum through the Golgi to the cilium. The chain is Rab GTPase-binding effector protein 1 (Rabep1) from Rattus norvegicus (Rat).